The chain runs to 196 residues: Pyridoxal 5'-phosphate synthase subunit PdxT (196 aa).

L-glutamine is bound at residue 47–49 (GES). Catalysis depends on Cys79, which acts as the Nucleophile. Residues Arg106 and 134–135 (IR) each bind L-glutamine. Residues His170 and Glu172 each act as charge relay system in the active site.

The protein belongs to the glutaminase PdxT/SNO family. In the presence of PdxS, forms a dodecamer of heterodimers. Only shows activity in the heterodimer.

It catalyses the reaction aldehydo-D-ribose 5-phosphate + D-glyceraldehyde 3-phosphate + L-glutamine = pyridoxal 5'-phosphate + L-glutamate + phosphate + 3 H2O + H(+). The enzyme catalyses L-glutamine + H2O = L-glutamate + NH4(+). Its pathway is cofactor biosynthesis; pyridoxal 5'-phosphate biosynthesis. Catalyzes the hydrolysis of glutamine to glutamate and ammonia as part of the biosynthesis of pyridoxal 5'-phosphate. The resulting ammonia molecule is channeled to the active site of PdxS. This Bacillus velezensis (strain DSM 23117 / BGSC 10A6 / LMG 26770 / FZB42) (Bacillus amyloliquefaciens subsp. plantarum) protein is Pyridoxal 5'-phosphate synthase subunit PdxT.